Here is a 251-residue protein sequence, read N- to C-terminus: Hydroxyacylglutathione hydrolase (251 aa).

7 residues coordinate Zn(2+): histidine 53, histidine 55, aspartate 57, histidine 58, histidine 110, aspartate 127, and histidine 165.

Belongs to the metallo-beta-lactamase superfamily. Glyoxalase II family. Monomer. The cofactor is Zn(2+).

It carries out the reaction an S-(2-hydroxyacyl)glutathione + H2O = a 2-hydroxy carboxylate + glutathione + H(+). It participates in secondary metabolite metabolism; methylglyoxal degradation; (R)-lactate from methylglyoxal: step 2/2. Its function is as follows. Thiolesterase that catalyzes the hydrolysis of S-D-lactoyl-glutathione to form glutathione and D-lactic acid. This Serratia proteamaculans (strain 568) protein is Hydroxyacylglutathione hydrolase.